A 209-amino-acid chain; its full sequence is Uracil phosphoribosyltransferase (209 aa).

Residues Arg79, Arg104, and 131–139 (DPMLATGGS) contribute to the 5-phospho-alpha-D-ribose 1-diphosphate site. Uracil contacts are provided by residues Ile194 and 199-201 (GDA). Asp200 lines the 5-phospho-alpha-D-ribose 1-diphosphate pocket.

Belongs to the UPRTase family. Mg(2+) is required as a cofactor.

The enzyme catalyses UMP + diphosphate = 5-phospho-alpha-D-ribose 1-diphosphate + uracil. The protein operates within pyrimidine metabolism; UMP biosynthesis via salvage pathway; UMP from uracil: step 1/1. Allosterically activated by GTP. Functionally, catalyzes the conversion of uracil and 5-phospho-alpha-D-ribose 1-diphosphate (PRPP) to UMP and diphosphate. This chain is Uracil phosphoribosyltransferase, found in Pediococcus pentosaceus (strain ATCC 25745 / CCUG 21536 / LMG 10740 / 183-1w).